Reading from the N-terminus, the 163-residue chain is Neurotrophin-3 (163 aa).

An N-terminal signal peptide occupies residues 1–3; it reads IQS. The propeptide occupies 4–119; it reads TSMDQGILTE…VLNRTSRRKR (116 aa). N-linked (GlcNAc...) asparagine glycosylation is present at asparagine 112.

Belongs to the NGF-beta family.

The protein resides in the secreted. In terms of biological role, seems to promote the survival of visceral and proprioceptive sensory neurons. In Chilabothrus striatus (Haitian boa constrictor), this protein is Neurotrophin-3 (NTF3).